A 498-amino-acid chain; its full sequence is Guanosine-5'-triphosphate,3'-diphosphate pyrophosphatase (498 aa).

The protein belongs to the GppA/Ppx family. GppA subfamily.

It catalyses the reaction guanosine 3'-diphosphate 5'-triphosphate + H2O = guanosine 3',5'-bis(diphosphate) + phosphate + H(+). It participates in purine metabolism; ppGpp biosynthesis; ppGpp from GTP: step 2/2. Its function is as follows. Catalyzes the conversion of pppGpp to ppGpp. Guanosine pentaphosphate (pppGpp) is a cytoplasmic signaling molecule which together with ppGpp controls the 'stringent response', an adaptive process that allows bacteria to respond to amino acid starvation, resulting in the coordinated regulation of numerous cellular activities. The chain is Guanosine-5'-triphosphate,3'-diphosphate pyrophosphatase from Yersinia enterocolitica serotype O:8 / biotype 1B (strain NCTC 13174 / 8081).